Consider the following 222-residue polypeptide: UPF0758 protein Cpar_0627 (222 aa).

Residues 100–222 (KIQGAQDVFE…WFSFRDHSLL (123 aa)) form the MPN domain. Zn(2+) is bound by residues His-171, His-173, and Asp-184. Positions 171 to 184 (HNHPSGDVQPSNAD) match the JAMM motif motif.

This sequence belongs to the UPF0758 family.

The polypeptide is UPF0758 protein Cpar_0627 (Chlorobaculum parvum (strain DSM 263 / NCIMB 8327) (Chlorobium vibrioforme subsp. thiosulfatophilum)).